The chain runs to 253 residues: Trans-aconitate 2-methyltransferase (253 aa).

This sequence belongs to the methyltransferase superfamily. Tam family.

It is found in the cytoplasm. The enzyme catalyses trans-aconitate + S-adenosyl-L-methionine = (E)-3-(methoxycarbonyl)pent-2-enedioate + S-adenosyl-L-homocysteine. Catalyzes the S-adenosylmethionine monomethyl esterification of trans-aconitate. This is Trans-aconitate 2-methyltransferase from Klebsiella pneumoniae (strain 342).